A 459-amino-acid chain; its full sequence is UDP-N-acetylmuramate--L-alanine ligase (459 aa).

113–119 contacts ATP; it reads GSHGKTT.

Belongs to the MurCDEF family.

The protein resides in the cytoplasm. The enzyme catalyses UDP-N-acetyl-alpha-D-muramate + L-alanine + ATP = UDP-N-acetyl-alpha-D-muramoyl-L-alanine + ADP + phosphate + H(+). It functions in the pathway cell wall biogenesis; peptidoglycan biosynthesis. Cell wall formation. The protein is UDP-N-acetylmuramate--L-alanine ligase of Persephonella marina (strain DSM 14350 / EX-H1).